The chain runs to 286 residues: Translocon-associated protein subunit alpha (286 aa).

A signal peptide spans Met-1–Leu-20. Topologically, residues Leu-21–Thr-207 are lumenal. Residues Glu-37 to Gly-75 show a composition bias toward acidic residues. Residues Glu-37–Ala-83 are disordered. Residues Asn-136 and Asn-191 are each glycosylated (N-linked (GlcNAc...) asparagine). A helical membrane pass occupies residues Ile-208–Leu-228. The Cytoplasmic segment spans residues Leu-229–Glu-286. At Ser-247 the chain carries Phosphoserine. The residue at position 260 (Thr-260) is a Phosphothreonine. The disordered stretch occupies residues Leu-261–Glu-286. Residue Ser-268 is modified to Phosphoserine. Residues Ser-268 to Lys-279 show a composition bias toward basic residues.

Belongs to the TRAP-alpha family. As to quaternary structure, heterotetramer of TRAP-alpha, TRAP-beta, TRAP-delta and TRAP-gamma. Interacts with palmitoylated calnexin (CALX), the interaction is required for efficient folding of glycosylated proteins. Post-translationally, phosphorylated in its cytoplasmic tail.

It is found in the endoplasmic reticulum membrane. TRAP proteins are part of a complex whose function is to bind calcium to the ER membrane and thereby regulate the retention of ER resident proteins. May be involved in the recycling of the translocation apparatus after completion of the translocation process or may function as a membrane-bound chaperone facilitating folding of translocated proteins. The sequence is that of Translocon-associated protein subunit alpha (SSR1) from Bos taurus (Bovine).